The primary structure comprises 31 residues: Nemertide alpha-5 (31 aa).

Cystine bridges form between Cys2–Cys16, Cys9–Cys20, and Cys15–Cys26. 4-hydroxyproline is present on residues Pro28 and Pro29.

This sequence belongs to the nemertide family. Confined to the epidermis and to the mucus layer.

The protein localises to the secreted. In terms of biological role, highly potent toxin against both insect and some mammalian sodium channels (Nav). It potently inhibits inactivation of insect sodium channels of B.germanica (BgNav1) (EC(50)=7.8 nM) and also delays the inactivation of mammalian Nav with potent activity on Nav1.3/SCN3A and Nav1.4/SCN4A (hNav1.1/SCN1A; EC(50)=102.1 nM, rNav1.2/SCN2A; EC(50)=156.1 nM, rNav1.3/SCN3A; EC(50)=9.4 nM, rNav1.4/SCN4A; EC(50)=15.4 nM, hNav1.5/SCN5A; EC(50)=132.7 nM, mNav1.6/SCN8A; EC(50)=66.9 nM, hNav1.9/SCN9A; EC(50)=73 nM). 1 uM is enough to completely inhibits the inactivation, resulting in sustained non-inactivating currents. In addition, the toxin significantly enhances the recovery from inactivation, and the open state is not required for the toxin to interact with the channel. In vivo, injection into brine shrimp (Artemia salina) stops movement or causes death after 24 hours (EC(50)=0.4 uM). This Ramphogordius pseudolacteus (Ribbon worm) protein is Nemertide alpha-5.